Reading from the N-terminus, the 900-residue chain is Alpha-actinin-3 (900 aa).

Methionine 1 carries the N-acetylmethionine modification. A disordered region spans residues 1–26 (MMMVMQPEGLGAGEGPFSGGGGGEYM). The segment at 1 to 260 (MMMVMQPEGL…IMTYVSCFYH (260 aa)) is actin-binding. Over residues 10–24 (LGAGEGPFSGGGGGE) the composition is skewed to gly residues. 2 consecutive Calponin-homology (CH) domains span residues 44-148 (KQQR…LRFA) and 157-263 (TSAK…HAFA). Spectrin repeat units lie at residues 287-397 (KLME…WLLS), 407-512 (HLAE…ALER), 522-633 (QLQL…TLQE), and 643-746 (RLRR…EVEN). 2 consecutive EF-hand domains span residues 759–794 (EQLN…MGYD) and 795–830 (LGEV…ETAE). Positions 772, 776, 778, 783, 808, and 810 each coordinate Ca(2+).

Belongs to the alpha-actinin family. As to quaternary structure, homodimer; antiparallel. Also forms heterodimers with ACTN2. Interacts with MYOZ1. In terms of tissue distribution, expression restricted to skeletal muscle fast (type 2) fibers (at protein level).

Its function is as follows. F-actin cross-linking protein which is thought to anchor actin to a variety of intracellular structures. This is a bundling protein. The chain is Alpha-actinin-3 (Actn3) from Mus musculus (Mouse).